The primary structure comprises 230 residues: Nicotinamide riboside kinase 2 (230 aa).

9–17 is a binding site for ATP; sequence GMTNGGKTT. Positions 16 and 35 each coordinate Mg(2+). The Proton acceptor role is filled by aspartate 35. Substrate is bound by residues 35–38 and 54–55; these read DDFF and WD. ATP is bound at residue arginine 130. Substrate is bound by residues arginine 131 and 136 to 137; that span reads YT. ATP is bound by residues 134–136 and 174–176; these read RNY and KSR. The interval 191–230 is disordered; the sequence is LLNRSQESAPSPARPARTQGPGRGCGHRTARPAASQQDSM.

This sequence belongs to the uridine kinase family. NRK subfamily. As to quaternary structure, monomer. Interacts with ITGB1 alone or when associated with alpha-7, but not with alpha-5. As to expression, predominantly expressed in skeletal muscle and, at a much lower level, in the heart (at protein level). No expression in brain, kidney, liver, lung, pancreas nor placenta.

The enzyme catalyses beta-nicotinamide D-riboside + ATP = beta-nicotinamide D-ribonucleotide + ADP + H(+). The catalysed reaction is beta-D-ribosylnicotinate + ATP = nicotinate beta-D-ribonucleotide + ADP + H(+). It functions in the pathway cofactor biosynthesis; NAD(+) biosynthesis. Catalyzes the phosphorylation of nicotinamide riboside (NR) and nicotinic acid riboside (NaR) to form nicotinamide mononucleotide (NMN) and nicotinic acid mononucleotide (NaMN). Reduces laminin matrix deposition and cell adhesion to laminin, but not to fibronectin. Involved in the regulation of PXN at the protein level and of PXN tyrosine phosphorylation. May play a role in the regulation of terminal myogenesis. In Homo sapiens (Human), this protein is Nicotinamide riboside kinase 2 (NMRK2).